We begin with the raw amino-acid sequence, 459 residues long: uncharacterized protein (459 aa).

One can recognise a TRAM domain in the interval 7 to 65 (PVNKNEIYTLTFEDLTHEGNGVAKIEGYPLFVPEVLPDEQAKVKVVKVNKNFGFGKLLE). The [4Fe-4S] cluster site is built by Cys-78, Cys-82, Cys-85, and Cys-164. S-adenosyl-L-methionine-binding residues include Gln-288, Tyr-317, Glu-338, and Asp-386. Cys-413 (nucleophile) is an active-site residue.

The protein belongs to the class I-like SAM-binding methyltransferase superfamily. RNA M5U methyltransferase family.

This is an uncharacterized protein from Oceanobacillus iheyensis (strain DSM 14371 / CIP 107618 / JCM 11309 / KCTC 3954 / HTE831).